A 103-amino-acid chain; its full sequence is Enhancer of rudimentary homolog (103 aa).

Belongs to the E(R) family. Homodimer.

Functionally, may have a role in the cell cycle. This is Enhancer of rudimentary homolog from Caenorhabditis elegans.